The chain runs to 329 residues: Transmembrane protein I329L (329 aa).

The signal sequence occupies residues 1–31; the sequence is MLRVFIFFVFLGSGLAGKVKSPITCKYFISK. Asparagine 32, asparagine 39, asparagine 44, asparagine 58, asparagine 76, asparagine 82, asparagine 101, asparagine 185, and asparagine 219 each carry an N-linked (GlcNAc...) asparagine; by host glycan. The Extracellular portion of the chain corresponds to 32–239; it reads NNTWYKYNVT…NTERYKNCYP (208 aa). Residues 240-260 form a helical membrane-spanning segment; it reads FVLVSIICSCISSLFLLICLL. Residues 261-329 lie on the Cytoplasmic side of the membrane; the sequence is RTICKKYSCT…EKKVSCSRRK (69 aa).

Belongs to the asfivirus I329L family. Post-translationally, highly glycosylated.

The protein localises to the host endoplasmic reticulum membrane. It localises to the host Golgi apparatus membrane. In terms of biological role, viral TLR3 homolog that probably prevents TLR3 dimerization and subsequent induction of IFN. Inhibits dsRNA-stimulated activation of NF-kB and IRF3. This chain is Transmembrane protein I329L, found in Ornithodoros (relapsing fever ticks).